We begin with the raw amino-acid sequence, 156 residues long: Small ribosomal subunit protein uS7 (156 aa).

It belongs to the universal ribosomal protein uS7 family. As to quaternary structure, part of the 30S ribosomal subunit. Contacts proteins S9 and S11.

One of the primary rRNA binding proteins, it binds directly to 16S rRNA where it nucleates assembly of the head domain of the 30S subunit. Is located at the subunit interface close to the decoding center, probably blocks exit of the E-site tRNA. The chain is Small ribosomal subunit protein uS7 from Nitrobacter hamburgensis (strain DSM 10229 / NCIMB 13809 / X14).